The primary structure comprises 607 residues: SNW/SKI-interacting protein A (607 aa).

Disordered regions lie at residues 29–77 (ERYG…GGAF), 178–205 (AQPKNVPTHDSESKFIKYKPSQQSAAFN), 217–265 (EMAQ…IPPC), 327–434 (LQLK…DRDR), and 516–607 (KVMK…ERGR). The span at 35-49 (SAQSDAAAAAAKPSG) shows a compositional bias: low complexity. Residues 190-353 (SKFIKYKPSQ…QKARMERTGA (164 aa)) form an SNW region. Residues 240-251 (PPVPVMHSPPRP) are compositionally biased toward pro residues. Coiled-coil stretches lie at residues 313–349 (AREAVQMRSKVQRELQLKEKERKEQELRALAQKARME) and 391–418 (EREARIERDRIREERRRERERERRLEAR). Basic and acidic residues-rich tracts occupy residues 327-339 (LQLKEKERKEQEL), 379-434 (EQPR…DRDR), 516-527 (KVMKTDRFKPDK), 535-550 (RSGKRDRPVEFDKQEE), and 562-571 (EVKKGKKAVE).

This sequence belongs to the SNW family. In terms of assembly, interacts with FLO6/SIP4. Interacts with DIS1. Widely expressed.

It localises to the nucleus. Acts as a positive regulator of drought and salt tolerance. Acts as a positive regulator of cell viability. The protein is SNW/SKI-interacting protein A of Oryza sativa subsp. japonica (Rice).